Consider the following 432-residue polypeptide: Trigger factor (432 aa).

The PPIase FKBP-type domain occupies 162–247 (GDLVKFDYQG…VKEVQAPVLP (86 aa)).

This sequence belongs to the FKBP-type PPIase family. Tig subfamily.

The protein localises to the cytoplasm. It carries out the reaction [protein]-peptidylproline (omega=180) = [protein]-peptidylproline (omega=0). In terms of biological role, involved in protein export. Acts as a chaperone by maintaining the newly synthesized protein in an open conformation. Functions as a peptidyl-prolyl cis-trans isomerase. This Thiobacillus denitrificans (strain ATCC 25259 / T1) protein is Trigger factor.